Consider the following 408-residue polypeptide: Probable pectate lyase 18 (408 aa).

Positions 1-24 are cleaved as a signal peptide; that stretch reads MKMQTKKLFITIVSFLLYAPLFLS. Asparagine 42 is a glycosylation site (N-linked (GlcNAc...) asparagine). Ca(2+)-binding residues include aspartate 206, aspartate 230, and aspartate 234. Residue arginine 286 is part of the active site.

The protein belongs to the polysaccharide lyase 1 family. Ca(2+) serves as cofactor. Expressed in flowers, but not in leaves.

It catalyses the reaction Eliminative cleavage of (1-&gt;4)-alpha-D-galacturonan to give oligosaccharides with 4-deoxy-alpha-D-galact-4-enuronosyl groups at their non-reducing ends.. The protein operates within glycan metabolism; pectin degradation; 2-dehydro-3-deoxy-D-gluconate from pectin: step 2/5. The protein is Probable pectate lyase 18 of Arabidopsis thaliana (Mouse-ear cress).